Reading from the N-terminus, the 1020-residue chain is Vacuolar membrane protease (1020 aa).

The Cytoplasmic segment spans residues 1-11; sequence MKCHNPFGFRV. A helical membrane pass occupies residues 12–32; that stretch reads GPVTFWTIIIYLALLVPLLWI. Residues 33–410 lie on the Vacuolar side of the membrane; the sequence is HETVPPAPSS…GFAVFGLRGL (378 aa). 3 N-linked (GlcNAc...) asparagine glycosylation sites follow: Asn-50, Asn-94, and Asn-130. Zn(2+) is bound by residues His-191 and Asp-203. The Proton acceptor role is filled by Glu-237. Zn(2+) is bound by residues Glu-238, Glu-263, and His-336. A helical membrane pass occupies residues 411–431; sequence FAWSLTLLIVSPLILAILVFI. Over 432-467 the chain is Cytoplasmic; the sequence is LNRHDKLYFFSRKINVHNEGSEDPVSIGGFRGFTRF. Residues 468–488 traverse the membrane as a helical segment; sequence PIAVGFSGALTLASAFLLTKI. Topologically, residues 489–491 are vacuolar; the sequence is NPM. A helical transmembrane segment spans residues 492-512; it reads IVYSSEYAVWGMMLSLFYVSL. The Cytoplasmic segment spans residues 513–529; that stretch reads WMTLKGSSAVRPSALQR. The helical transmembrane segment at 530–550 threads the bilayer; it reads GYIHIWLFIVSWGLLIVVAVT. Topologically, residues 551 to 561 are vacuolar; it reads EDRLKIASGYP. The chain crosses the membrane as a helical span at residues 562–582; sequence VVFLHSALFLSTVISFLELFG. The Cytoplasmic portion of the chain corresponds to 583–690; it reads LTKKHDYARR…RLPGWTWILQ (108 aa). The disordered stretch occupies residues 609–648; it reads DDALIAPDTPNDEAEDSDGEDSEHEPTETTPLRAGGDSRV. A compositionally biased stretch (acidic residues) spans 618–631; the sequence is PNDEAEDSDGEDSE. The helical transmembrane segment at 691 to 711 threads the bilayer; that stretch reads FLLLAPINVILWGQIGLFAVA. The Vacuolar segment spans residues 712–724; that stretch reads ATQAGGADGGSVL. Residues 725–745 traverse the membrane as a helical segment; sequence TTYLIIAVLSIVILVPLAPFI. Residues 746 to 750 lie on the Cytoplasmic side of the membrane; sequence HRVHY. A helical membrane pass occupies residues 751–771; that stretch reads YVPIILFAAFAGTLIYNLIAF. Topologically, residues 772–1020 are vacuolar; it reads PFSANNRYKI…VGLVRPVKRF (249 aa). Residues Asn-851, Asn-868, and Asn-873 are each glycosylated (N-linked (GlcNAc...) asparagine).

It belongs to the peptidase M28 family. Requires Zn(2+) as cofactor.

The protein resides in the vacuole membrane. In terms of biological role, may be involved in vacuolar sorting and osmoregulation. In Verticillium alfalfae (strain VaMs.102 / ATCC MYA-4576 / FGSC 10136) (Verticillium wilt of alfalfa), this protein is Vacuolar membrane protease.